The sequence spans 259 residues: HTH-type quorum sensing-dependent transcriptional regulator VjbR (259 aa).

The C12-HSL binding stretch occupies residues 76–179 (KNYFAIDPVF…AGIIHGTVCG (104 aa)). Residues 183-248 (ANSVASLLTP…SAVATALSLG (66 aa)) form the HTH luxR-type domain. A DNA-binding region (H-T-H motif) is located at residues 207-226 (DGEIAEILSIARWTVVTYLQ).

In terms of biological role, transcriptional regulator involved in the global control of Brucella gene expression. Mediates the effects of the quorum sensing autoinducer C12-HSL (N-dodecanoyl-homoserine lactone) on a large and diverse number of genes. This is HTH-type quorum sensing-dependent transcriptional regulator VjbR (vjbR) from Brucella suis biovar 1 (strain 1330).